We begin with the raw amino-acid sequence, 500 residues long: Protein DETOXIFICATION 29 (500 aa).

Helical transmembrane passes span 67–87, 91–111, 132–152, 161–181, 197–217, 227–247, 277–297, 302–322, 349–369, 393–413, 419–439, and 449–469; these read GAIT…AVSV, VVAG…ETLC, VILN…APIL, ISSA…AYAI, VMAV…WFVI, LAVV…VYIF, AVML…AGYL, ISVA…MIAI, LVAV…LLIF, ILAL…VAVG, VVAY…GLLL, and GIWC…TWMI.

The protein belongs to the multi antimicrobial extrusion (MATE) (TC 2.A.66.1) family.

Its subcellular location is the vacuole membrane. The protein is Protein DETOXIFICATION 29 of Arabidopsis thaliana (Mouse-ear cress).